A 70-amino-acid polypeptide reads, in one-letter code: Small ribosomal subunit protein bS21 (70 aa).

The protein belongs to the bacterial ribosomal protein bS21 family.

This Azoarcus sp. (strain BH72) protein is Small ribosomal subunit protein bS21.